A 311-amino-acid polypeptide reads, in one-letter code: Probable cell division protein WhiA (311 aa).

The segment at residues Thr277 to Glu311 is a DNA-binding region (H-T-H motif).

The protein belongs to the WhiA family.

Involved in cell division and chromosome segregation. The sequence is that of Probable cell division protein WhiA from Lactobacillus acidophilus (strain ATCC 700396 / NCK56 / N2 / NCFM).